The primary structure comprises 98 residues: NADH-ubiquinone oxidoreductase chain 4L (98 aa).

The next 3 helical transmembrane spans lie at 1–21, 29–49, and 61–81; these read MSSI…GLLM, SLLC…VTML, and VMLM…LVTV.

Belongs to the complex I subunit 4L family. In terms of assembly, core subunit of respiratory chain NADH dehydrogenase (Complex I) which is composed of 45 different subunits.

It localises to the mitochondrion inner membrane. It catalyses the reaction a ubiquinone + NADH + 5 H(+)(in) = a ubiquinol + NAD(+) + 4 H(+)(out). Core subunit of the mitochondrial membrane respiratory chain NADH dehydrogenase (Complex I) which catalyzes electron transfer from NADH through the respiratory chain, using ubiquinone as an electron acceptor. Part of the enzyme membrane arm which is embedded in the lipid bilayer and involved in proton translocation. This chain is NADH-ubiquinone oxidoreductase chain 4L (MT-ND4L), found in Tamandua tetradactyla (Southern anteater).